The chain runs to 341 residues: Major capsid protein (341 aa).

Positions 109–129 form a coiled coil; that stretch reads RRIILQNMKDEELAIAQVEEK.

It belongs to the lambda phage major capsid protein family. In terms of assembly, homomultimer.

The protein resides in the virion. It localises to the host cytoplasm. Its function is as follows. Assembles to form an icosahedral capsid with a T=7 symmetry. The icosahedral capsid is about 60 nm in diameter and composed of 415 major capsid proteins. The assembly is primed by the interaction between capsid assembly protease and portal dodecamer, and major capsid proteins assemble cooperatively to form the procapsid with the help of capsid scaffolding protein. Major capsid protein forms hexons and pentons of the icosahedron. Viral genomic DNA is packaged into the procapsid through the portal vertex. The packaging triggers a dramatic reconfiguration of the capsid shell. The protein is Major capsid protein (E) of Enterobacteria phage phi80 (Bacteriophage phi-80).